The chain runs to 130 residues: Small ribosomal subunit protein uS9 (130 aa).

Belongs to the universal ribosomal protein uS9 family.

The sequence is that of Small ribosomal subunit protein uS9 from Anoxybacillus flavithermus (strain DSM 21510 / WK1).